Reading from the N-terminus, the 197-residue chain is Transcription factor FapR (197 aa).

Belongs to the FapR family.

Functionally, transcriptional factor involved in regulation of membrane lipid biosynthesis by repressing genes involved in fatty acid and phospholipid metabolism. This Bacillus mycoides (strain KBAB4) (Bacillus weihenstephanensis) protein is Transcription factor FapR.